We begin with the raw amino-acid sequence, 489 residues long: MSAYGLQRLYIGGDYVDATSGVTFDTFDPATGELLATVQQASEADIERAVQSAREGQRAWAAMTAMQRSRILRRAVDLLRERNDELAELEMRDTGKPIAETRAVDIVTGADVIEYYAGLATAIEGQQIPLRAESFVYTRREPLGVTAGIGAWNYPIQIACWKSAPALAAGNAMIFKPSEVTPLSASKLAEIYLEAGVPAGVFNVVQGDGRVGAMLSAHPGIAKISFTGGVETGKKVMSMAGGSSLKEVTMELGGKSPLVVFEDADLDRAADIAVTANFFSAGQVCTNGTRVFVHQSVQPAFEARVIERVKRIRVGKPSDPSTNFGPLASAAQLDKVLGFIESGKREGARLVAGGARIVEGDYARGQYVQPTVFSDCRDDMKIVREEIFGPVMSILSFVDEDDVIERANDTIYGLAAGVVTENLARAHRAIHRLEAGICWINTWGESPAEMPVGGYKQSGVGRENGITTLEHYTRIKSVQVELGKYQPVF.

2 residues coordinate K(+): Thr-26 and Asp-93. 150–152 provides a ligand contact to NAD(+); the sequence is GAW. The active-site Charge relay system is the Lys-162. 176–179 is an NAD(+) binding site; sequence KPSE. Val-180 lines the K(+) pocket. 229-232 contributes to the NAD(+) binding site; it reads GVET. Leu-245 lines the K(+) pocket. Glu-251 serves as the catalytic Proton acceptor. NAD(+)-binding residues include Gly-253, Cys-285, and Glu-386. Cys-285 (nucleophile) is an active-site residue. Cys-285 carries the post-translational modification Cysteine sulfenic acid (-SOH). 2 residues coordinate K(+): Lys-456 and Gly-459. Glu-463 serves as the catalytic Charge relay system.

This sequence belongs to the aldehyde dehydrogenase family. Dimer of dimers. K(+) serves as cofactor.

It catalyses the reaction betaine aldehyde + NAD(+) + H2O = glycine betaine + NADH + 2 H(+). The protein operates within amine and polyamine biosynthesis; betaine biosynthesis via choline pathway; betaine from betaine aldehyde: step 1/1. Functionally, involved in the biosynthesis of the osmoprotectant glycine betaine. Catalyzes the irreversible oxidation of betaine aldehyde to the corresponding acid. The polypeptide is Betaine aldehyde dehydrogenase (Paraburkholderia phymatum (strain DSM 17167 / CIP 108236 / LMG 21445 / STM815) (Burkholderia phymatum)).